The primary structure comprises 311 residues: Methionyl-tRNA formyltransferase (311 aa).

Residue 112 to 115 participates in (6S)-5,6,7,8-tetrahydrofolate binding; sequence SLLP.

Belongs to the Fmt family.

The catalysed reaction is L-methionyl-tRNA(fMet) + (6R)-10-formyltetrahydrofolate = N-formyl-L-methionyl-tRNA(fMet) + (6S)-5,6,7,8-tetrahydrofolate + H(+). Attaches a formyl group to the free amino group of methionyl-tRNA(fMet). The formyl group appears to play a dual role in the initiator identity of N-formylmethionyl-tRNA by promoting its recognition by IF2 and preventing the misappropriation of this tRNA by the elongation apparatus. The protein is Methionyl-tRNA formyltransferase of Rhizobium etli (strain ATCC 51251 / DSM 11541 / JCM 21823 / NBRC 15573 / CFN 42).